The chain runs to 437 residues: Epsilon-sarcoglycan (437 aa).

Residues 1-317 are Extracellular-facing; sequence MLLFWWWELG…LKSRDYYTDF (317 aa). A glycan (N-linked (GlcNAc...) asparagine) is linked at Asn200. Residues 318 to 338 form a helical membrane-spanning segment; sequence LVTLAVPSAVALVLFLILAYI. At 339 to 437 the chain is on the cytoplasmic side; the sequence is MCCRREGVEK…QPQTTGKWYP (99 aa).

This sequence belongs to the sarcoglycan alpha/epsilon family. Post-translationally, N-glycosylated. Ubiquitinated, leading to its degradation by the proteasome. Identified in all tissues tested. Expression highest in lung and placenta, moderate in brain, heart and skeletal muscle, low in kidney and liver. Also detected in embryo.

The protein resides in the cell membrane. Its subcellular location is the sarcolemma. It is found in the golgi apparatus. It localises to the cell projection. The protein localises to the dendrite. The protein resides in the cytoplasm. Its subcellular location is the cytoskeleton. Component of the sarcoglycan complex, a subcomplex of the dystrophin-glycoprotein complex which forms a link between the F-actin cytoskeleton and the extracellular matrix. In Mus musculus (Mouse), this protein is Epsilon-sarcoglycan (Sgce).